The sequence spans 463 residues: Spermidine/putrescine import ATP-binding protein PotA (463 aa).

Residues 10 to 240 (IEVSHVSKFF…PINSFVADFI (231 aa)) form the ABC transporter domain. Residue 42–49 (GPSGCGKT) participates in ATP binding.

This sequence belongs to the ABC transporter superfamily. Spermidine/putrescine importer (TC 3.A.1.11.1) family. As to quaternary structure, the complex is composed of two ATP-binding proteins (PotA), two transmembrane proteins (PotB and PotC) and a solute-binding protein (PotD).

Its subcellular location is the cell inner membrane. The catalysed reaction is ATP + H2O + polyamine-[polyamine-binding protein]Side 1 = ADP + phosphate + polyamineSide 2 + [polyamine-binding protein]Side 1.. Functionally, part of the ABC transporter complex PotABCD involved in spermidine/putrescine import. Responsible for energy coupling to the transport system. The chain is Spermidine/putrescine import ATP-binding protein PotA from Bacteroides thetaiotaomicron (strain ATCC 29148 / DSM 2079 / JCM 5827 / CCUG 10774 / NCTC 10582 / VPI-5482 / E50).